A 280-amino-acid polypeptide reads, in one-letter code: Hematopoietically-expressed homeobox protein HHEX homolog (280 aa).

2 disordered regions span residues 1–35 (MSTL…GLAP) and 221–280 (RRVK…EKEA). The segment at residues 165 to 224 (RKGGQVRFSNDQTMELEKKFESQKYLSPPERKKLAKLLQLSERQVKTWFQNRRAKWRRVK) is a DNA-binding region (homeobox). Residues 232–252 (GEGDENSHEKPRDLDRDDFSR) are compositionally biased toward basic and acidic residues.

It is found in the nucleus. Its function is as follows. Transcription factor that may play a central role in activating or maintaining gene expression in the vegetal pole. Part of a gene regulatory circuit with Erg and Tgif that operates early in mesoderm development. This is Hematopoietically-expressed homeobox protein HHEX homolog from Patiria miniata (Bat star).